The following is a 161-amino-acid chain: Phosphopantetheine adenylyltransferase (161 aa).

T10 is a binding site for substrate. Residues 10 to 11 (TF) and H18 contribute to the ATP site. Substrate contacts are provided by K42, M74, and R88. Residues 89–91 (GLR), E99, and 124–130 (WSFISSS) each bind ATP.

The protein belongs to the bacterial CoaD family. As to quaternary structure, homohexamer. Mg(2+) is required as a cofactor.

It is found in the cytoplasm. The enzyme catalyses (R)-4'-phosphopantetheine + ATP + H(+) = 3'-dephospho-CoA + diphosphate. It functions in the pathway cofactor biosynthesis; coenzyme A biosynthesis; CoA from (R)-pantothenate: step 4/5. Reversibly transfers an adenylyl group from ATP to 4'-phosphopantetheine, yielding dephospho-CoA (dPCoA) and pyrophosphate. The polypeptide is Phosphopantetheine adenylyltransferase (Serratia marcescens).